The sequence spans 199 residues: Chaperone protein TorD (199 aa).

It belongs to the TorD/DmsD family. TorD subfamily.

Its subcellular location is the cytoplasm. In terms of biological role, involved in the biogenesis of TorA. Acts on TorA before the insertion of the molybdenum cofactor and, as a result, probably favors a conformation of the apoenzyme that is competent for acquiring the cofactor. The polypeptide is Chaperone protein TorD (Escherichia coli O81 (strain ED1a)).